A 255-amino-acid polypeptide reads, in one-letter code: Ribonuclease PH (255 aa).

Residues R86 and 124–126 (GTR) contribute to the phosphate site.

Belongs to the RNase PH family. In terms of assembly, homohexameric ring arranged as a trimer of dimers.

The catalysed reaction is tRNA(n+1) + phosphate = tRNA(n) + a ribonucleoside 5'-diphosphate. Its function is as follows. Phosphorolytic 3'-5' exoribonuclease that plays an important role in tRNA 3'-end maturation. Removes nucleotide residues following the 3'-CCA terminus of tRNAs; can also add nucleotides to the ends of RNA molecules by using nucleoside diphosphates as substrates, but this may not be physiologically important. Probably plays a role in initiation of 16S rRNA degradation (leading to ribosome degradation) during starvation. This Geobacillus thermodenitrificans (strain NG80-2) protein is Ribonuclease PH.